A 74-amino-acid polypeptide reads, in one-letter code: uncharacterized protein (74 aa).

The tract at residues 39–74 (SSPQAPGTLKPRALVRPSPGPVQENHLSEAQFPPKL) is disordered.

This is an uncharacterized protein from Homo sapiens (Human).